The primary structure comprises 375 residues: tRNA-specific 2-thiouridylase MnmA (375 aa).

Residues 7-14 and M33 contribute to the ATP site; that span reads GLSGGVDS. An interaction with target base in tRNA region spans residues 102-104; it reads NPD. The active-site Nucleophile is the C107. C107 and C205 are disulfide-bonded. G132 is a binding site for ATP. An interaction with tRNA region spans residues 155–157; it reads KDQ. The active-site Cysteine persulfide intermediate is the C205. Residues 313–314 are interaction with tRNA; it reads RY.

Belongs to the MnmA/TRMU family.

It is found in the cytoplasm. The catalysed reaction is S-sulfanyl-L-cysteinyl-[protein] + uridine(34) in tRNA + AH2 + ATP = 2-thiouridine(34) in tRNA + L-cysteinyl-[protein] + A + AMP + diphosphate + H(+). Catalyzes the 2-thiolation of uridine at the wobble position (U34) of tRNA, leading to the formation of s(2)U34. This chain is tRNA-specific 2-thiouridylase MnmA, found in Phytoplasma australiense.